Reading from the N-terminus, the 335-residue chain is UPF0353 protein Mvan_2751 (335 aa).

The next 2 helical transmembrane spans lie at 18-38 and 67-87; these read WFFLFFLVVLGLVALYVIVQM and LPAVLLILSLMSFTVAMAGPT. One can recognise a VWFA domain in the interval 98–294; sequence VVMLVIDVSQ…EQLKQVFTNL (197 aa). A helical transmembrane segment spans residues 309–329; sequence VGWLRIGSLVLALAALGALLI.

It belongs to the UPF0353 family.

It localises to the cell membrane. This chain is UPF0353 protein Mvan_2751, found in Mycolicibacterium vanbaalenii (strain DSM 7251 / JCM 13017 / BCRC 16820 / KCTC 9966 / NRRL B-24157 / PYR-1) (Mycobacterium vanbaalenii).